The following is a 198-amino-acid chain: Peptidyl-tRNA hydrolase (198 aa).

Tyrosine 15 provides a ligand contact to tRNA. Histidine 20 serves as the catalytic Proton acceptor. 3 residues coordinate tRNA: phenylalanine 66, asparagine 68, and asparagine 114.

It belongs to the PTH family. As to quaternary structure, monomer.

The protein resides in the cytoplasm. It carries out the reaction an N-acyl-L-alpha-aminoacyl-tRNA + H2O = an N-acyl-L-amino acid + a tRNA + H(+). In terms of biological role, hydrolyzes ribosome-free peptidyl-tRNAs (with 1 or more amino acids incorporated), which drop off the ribosome during protein synthesis, or as a result of ribosome stalling. Functionally, catalyzes the release of premature peptidyl moieties from peptidyl-tRNA molecules trapped in stalled 50S ribosomal subunits, and thus maintains levels of free tRNAs and 50S ribosomes. This is Peptidyl-tRNA hydrolase from Cupriavidus metallidurans (strain ATCC 43123 / DSM 2839 / NBRC 102507 / CH34) (Ralstonia metallidurans).